A 504-amino-acid chain; its full sequence is Maturase K (504 aa).

Belongs to the intron maturase 2 family. MatK subfamily.

It localises to the plastid. Its subcellular location is the chloroplast. In terms of biological role, usually encoded in the trnK tRNA gene intron. Probably assists in splicing its own and other chloroplast group II introns. This is Maturase K from Wollastonia biflora (Beach sunflower).